The chain runs to 725 residues: N-alpha-acetyltransferase 35, NatC auxiliary subunit (725 aa).

The tract at residues 548–573 is disordered; sequence ERIMEEQQKGRSSKKTKKKKKVRPLS. A compositionally biased stretch (basic residues) spans 558–571; the sequence is RSSKKTKKKKKVRP.

The protein belongs to the MAK10 family. Component of the N-terminal acetyltransferase C (NatC) complex.

It is found in the cytoplasm. Its function is as follows. Auxillary component of the N-terminal acetyltransferase C (NatC) complex which catalyzes acetylation of N-terminal methionine residues. N-terminal acetylation protects proteins from ubiquitination and degradation by the N-end rule pathway. The protein is N-alpha-acetyltransferase 35, NatC auxiliary subunit (NAA35) of Gallus gallus (Chicken).